We begin with the raw amino-acid sequence, 396 residues long: MSKEKFERTKPHVNVGTIGHVDHGKTTLTAAITKIMSKAHGGEFKDYSDIDNAPEERERGITISTAHVEYESEARHYAHVDCPGHADYVKNMITGAAQMDGAIIVIAATDGPMAQTREHILLSKQVGVPYIIVYMNKADMVDDEELVELVELEIRELLDEYDFPGDDTPVIFGSALKALEDDTSDIGVPSIIKLVEALDTYIPTPKRDTDKLFLMPIEDVFSISGRGTVVTGRIEAGIVNVGDELEIVGIKDTQTTTCTGVEMFRKLLDSGEAGDNVGVLLRGTKREEVERGQVLAKPGSIKPHSKFEAEVYILSKDEGGRHTPFFNNYRPQFYFRTTDVTGACQLPDGVEMVMPGDNVKMQVELLSPIAMEDGLRFAIREGGRTVGAGVVSKVAD.

Residues 10 to 206 form the tr-type G domain; the sequence is KPHVNVGTIG…ALDTYIPTPK (197 aa). Residues 19 to 26 are G1; it reads GHVDHGKT. Residue 19–26 coordinates GTP; that stretch reads GHVDHGKT. Residue Thr26 participates in Mg(2+) binding. The interval 60-64 is G2; that stretch reads GITIS. The G3 stretch occupies residues 81 to 84; that stretch reads DCPG. GTP contacts are provided by residues 81 to 85 and 136 to 139; these read DCPGH and NKAD. The tract at residues 136–139 is G4; sequence NKAD. The G5 stretch occupies residues 174–176; that stretch reads SAL.

This sequence belongs to the TRAFAC class translation factor GTPase superfamily. Classic translation factor GTPase family. EF-Tu/EF-1A subfamily. In terms of assembly, monomer.

It localises to the cytoplasm. It carries out the reaction GTP + H2O = GDP + phosphate + H(+). Functionally, GTP hydrolase that promotes the GTP-dependent binding of aminoacyl-tRNA to the A-site of ribosomes during protein biosynthesis. The protein is Elongation factor Tu 2 of Ruthia magnifica subsp. Calyptogena magnifica.